Reading from the N-terminus, the 508-residue chain is MTILIKNNNLQQLLSSWIKLSYSYTISGIQSDSRLVKPGYLFCVLKKKNINETNKHMIHAIKNGAKIILYDTKQKFKNGTLKKIINHVPIIYFFKLSKNLPQILKKYYHFENNFTLIGITGTNGKSTTTHIVSQWANLLNVKIGIMGTLGHGINNNLKKTDNTTESSANIHQFLYHMLKQNIKTFAIEISSHGIVQHRIEQLPFKIAILTNITPEHLDYHRTMDNYINAKKAFFFKYNINTLIINADDLIAKTWIKKLNHKNVITITTKDQNFNSISPKKWIHANKIIQKQNCTNIHFNSSWGHGILNSTLIGHFNVINILLALATLLELNYPITDLVKVCKYIKTISGRMEHIHIVNKPKVIIDYAHNTNGLKNLLSTLKEIFNKKKIWCIFGCGGDRDKTKRPYMGSIAEKMSDQVILTNDNPRNEHPLKIIKNILSGCKFKNKIRIIPNREHAIKFAVNNADKEDIIVVAGKGHEKYQIINNKYYHFSDHKIIKKLLNKKNYDFN.

Ser-33 contacts UDP-N-acetyl-alpha-D-muramoyl-L-alanyl-D-glutamate. 121-127 (GTNGKST) is a binding site for ATP. Residues Asn-162, 163-164 (TT), Ser-190, Gln-196, and Arg-198 each bind UDP-N-acetyl-alpha-D-muramoyl-L-alanyl-D-glutamate. Residue Lys-230 is modified to N6-carboxylysine. Residues Arg-399, 423 to 426 (DNPR), Gly-474, and Glu-478 contribute to the meso-2,6-diaminopimelate site. The Meso-diaminopimelate recognition motif signature appears at 423-426 (DNPR).

The protein belongs to the MurCDEF family. MurE subfamily. It depends on Mg(2+) as a cofactor. Post-translationally, carboxylation is probably crucial for Mg(2+) binding and, consequently, for the gamma-phosphate positioning of ATP.

The protein localises to the cytoplasm. It carries out the reaction UDP-N-acetyl-alpha-D-muramoyl-L-alanyl-D-glutamate + meso-2,6-diaminopimelate + ATP = UDP-N-acetyl-alpha-D-muramoyl-L-alanyl-gamma-D-glutamyl-meso-2,6-diaminopimelate + ADP + phosphate + H(+). Its pathway is cell wall biogenesis; peptidoglycan biosynthesis. Its function is as follows. Catalyzes the addition of meso-diaminopimelic acid to the nucleotide precursor UDP-N-acetylmuramoyl-L-alanyl-D-glutamate (UMAG) in the biosynthesis of bacterial cell-wall peptidoglycan. In Buchnera aphidicola subsp. Baizongia pistaciae (strain Bp), this protein is UDP-N-acetylmuramoyl-L-alanyl-D-glutamate--2,6-diaminopimelate ligase.